We begin with the raw amino-acid sequence, 689 residues long: Glycine--tRNA ligase beta subunit (689 aa).

Belongs to the class-II aminoacyl-tRNA synthetase family. As to quaternary structure, tetramer of two alpha and two beta subunits.

The protein localises to the cytoplasm. It carries out the reaction tRNA(Gly) + glycine + ATP = glycyl-tRNA(Gly) + AMP + diphosphate. This Erwinia tasmaniensis (strain DSM 17950 / CFBP 7177 / CIP 109463 / NCPPB 4357 / Et1/99) protein is Glycine--tRNA ligase beta subunit.